The chain runs to 438 residues: Coenzyme A disulfide reductase (438 aa).

8 to 33 (GAVAGGATCASQIRRLDKESDIIIFE) provides a ligand contact to FAD. 5 residues coordinate substrate: Thr15, Gln19, Arg22, Ser39, and Asn42. Cys43 serves as the catalytic Nucleophile. The Redox-active role is filled by Cys43. Lys71 lines the substrate pocket. Residue 151–166 (VLVVGAGYVSLEVLEN) coordinates NADP(+). 267–277 (TNVPNIYAIGD) provides a ligand contact to FAD. Substrate is bound at residue His299. Tyr419 is a binding site for FAD. Lys427 is a binding site for substrate.

The protein belongs to the class-III pyridine nucleotide-disulfide oxidoreductase family. As to quaternary structure, homodimer. The cofactor is FAD.

The catalysed reaction is NADP(+) + 2 CoA = CoA-disulfide + NADPH + H(+). In terms of biological role, catalyzes specifically the NADPH-dependent reduction of coenzyme A disulfide. This chain is Coenzyme A disulfide reductase, found in Staphylococcus aureus (strain MSSA476).